The primary structure comprises 77 residues: Large ribosomal subunit protein bL28 (77 aa).

Residues 1-20 form a disordered region; that stretch reads MSRVCQVTGKGPVTGNNISH.

Belongs to the bacterial ribosomal protein bL28 family.

This chain is Large ribosomal subunit protein bL28, found in Pseudomonas fluorescens (strain SBW25).